We begin with the raw amino-acid sequence, 234 residues long: Ribose-5-phosphate isomerase A (234 aa).

Residues 28–31 (TGST), 83–86 (DGAD), and 96–99 (KGGG) each bind substrate. Glutamate 105 acts as the Proton acceptor in catalysis. Lysine 123 contacts substrate.

Belongs to the ribose 5-phosphate isomerase family. As to quaternary structure, homodimer.

It catalyses the reaction aldehydo-D-ribose 5-phosphate = D-ribulose 5-phosphate. The protein operates within carbohydrate degradation; pentose phosphate pathway; D-ribose 5-phosphate from D-ribulose 5-phosphate (non-oxidative stage): step 1/1. In terms of biological role, catalyzes the reversible conversion of ribose-5-phosphate to ribulose 5-phosphate. This chain is Ribose-5-phosphate isomerase A, found in Bartonella quintana (strain Toulouse) (Rochalimaea quintana).